The following is a 906-amino-acid chain: Protein translocase subunit SecA (906 aa).

ATP contacts are provided by residues glutamine 86, 104–108 (GEGKT), and aspartate 511. Composition is skewed to basic and acidic residues over residues 853 to 865 (HESV…RHDE) and 877 to 888 (VRREGPKVKRND). The interval 853–906 (HESVIDNNQRHDEDEQEEAPKVQQVRREGPKVKRNDPCPCGSGKKYKQCHGKVE) is disordered. Zn(2+) is bound by residues cysteine 890, cysteine 892, cysteine 901, and histidine 902. Residues 896-906 (KKYKQCHGKVE) are compositionally biased toward basic residues.

This sequence belongs to the SecA family. Monomer and homodimer. Part of the essential Sec protein translocation apparatus which comprises SecA, SecYEG and auxiliary proteins SecDF-YajC and YidC. Requires Zn(2+) as cofactor.

It is found in the cell inner membrane. The protein localises to the cytoplasm. It carries out the reaction ATP + H2O + cellular proteinSide 1 = ADP + phosphate + cellular proteinSide 2.. In terms of biological role, part of the Sec protein translocase complex. Interacts with the SecYEG preprotein conducting channel. Has a central role in coupling the hydrolysis of ATP to the transfer of proteins into and across the cell membrane, serving both as a receptor for the preprotein-SecB complex and as an ATP-driven molecular motor driving the stepwise translocation of polypeptide chains across the membrane. This chain is Protein translocase subunit SecA, found in Francisella tularensis subsp. holarctica (strain FTNF002-00 / FTA).